A 108-amino-acid polypeptide reads, in one-letter code: Insulin-1 (108 aa).

The first 24 residues, 1–24 (MALLVHFLPLLALLALWEPKPTQA), serve as a signal peptide directing secretion. 3 cysteine pairs are disulfide-bonded: Cys31-Cys94, Cys43-Cys107, and Cys93-Cys98. The propeptide at 57-85 (EVEDPQVEQLELGGSPGDLQTLALEVARQ) is c peptide.

It belongs to the insulin family. Heterodimer of a B chain and an A chain linked by two disulfide bonds.

The protein localises to the secreted. Insulin decreases blood glucose concentration. It increases cell permeability to monosaccharides, amino acids and fatty acids. It accelerates glycolysis, the pentose phosphate cycle, and glycogen synthesis in liver. The protein is Insulin-1 (Ins1) of Mus musculus (Mouse).